The chain runs to 1192 residues: Integrator complex subunit 2 (1192 aa).

A helical membrane pass occupies residues 420-436 (FVSLSFCMLLAFSTLVS).

The protein belongs to the Integrator subunit 2 family. As to quaternary structure, component of the Integrator complex, composed of core subunits INTS1, INTS2, INTS3, INTS4, INTS5, INTS6, INTS7, INTS8, INTS9/RC74, INTS10, INTS11/CPSF3L, INTS12, INTS13, INTS14 and INTS15. The core complex associates with protein phosphatase 2A subunits PPP2CA and PPP2R1A, to form the Integrator-PP2A (INTAC) complex.

Its subcellular location is the nucleus. The protein resides in the nucleus membrane. It localises to the cytoplasm. Functionally, component of the integrator complex, a multiprotein complex that terminates RNA polymerase II (Pol II) transcription in the promoter-proximal region of genes. The integrator complex provides a quality checkpoint during transcription elongation by driving premature transcription termination of transcripts that are unfavorably configured for transcriptional elongation: the complex terminates transcription by (1) catalyzing dephosphorylation of the C-terminal domain (CTD) of Pol II subunit POLR2A/RPB1 and SUPT5H/SPT5, (2) degrading the exiting nascent RNA transcript via endonuclease activity and (3) promoting the release of Pol II from bound DNA. The integrator complex is also involved in terminating the synthesis of non-coding Pol II transcripts, such as enhancer RNAs (eRNAs), small nuclear RNAs (snRNAs), telomerase RNAs and long non-coding RNAs (lncRNAs). This chain is Integrator complex subunit 2 (INTS2), found in Gallus gallus (Chicken).